Consider the following 316-residue polypeptide: uncharacterized protein (316 aa).

The tract at residues 285–316 (APEGDLGDIIEVDPSEPRSDPYRRLRTPPPGG) is disordered. Acidic residues predominate over residues 289 to 298 (DLGDIIEVDP).

Functionally, possibly necessary for replication. This is an uncharacterized protein from Halobacterium salinarum (Halobacterium halobium).